Here is a 471-residue protein sequence, read N- to C-terminus: Type 2 glycosyltransferase (471 aa).

The chain crosses the membrane as a helical span at residues 4-24; that stretch reads ILGWFWAFVSAFVLRYLRTIV. N-linked (GlcNAc...) asparagine glycosylation is found at Asn-29, Asn-88, and Asn-222. 3 helical membrane-spanning segments follow: residues 305-325, 339-359, and 368-388; these read CLQT…FYSL, MAFT…KLWG, and VIYI…KFWG. Residue Asn-458 is glycosylated (N-linked (GlcNAc...) asparagine).

It belongs to the GT2 glycosyltransferase family.

The protein resides in the cell membrane. Functionally, glycosyltransferase involved in the maintenance of the outermost surface of the fungal cell wall. Likely functions in the synthesis of a currently unknown, potentially minor but widespread, extracellular or outer cell wall polysaccharide which plays a key role in facilitating many interactions between plants and fungi by enabling hyphal growth on solid matrices. This is Type 2 glycosyltransferase from Zymoseptoria tritici (strain CBS 115943 / IPO323) (Speckled leaf blotch fungus).